A 198-amino-acid polypeptide reads, in one-letter code: MTERSLNNLILASSSKRRIALLKQINIEPGLILPADIDEAPLKKELPKDYSIRMAKSKAEKIQSLNPNYFVLGVDTVVACGRRILLKAENVEQAEKCIRLLSGRRHRVYTSVCLLTPDQSKQHIRTVVTIVKFKRLSEQEIKYYLASEEWKNRAGGCNIQGLAGVFVLFLRGSYSSVIGLPLHETYCLLSNYFNFNLY.

Catalysis depends on Asp75, which acts as the Proton acceptor.

It belongs to the Maf family. YhdE subfamily. It depends on a divalent metal cation as a cofactor.

Its subcellular location is the cytoplasm. The enzyme catalyses dTTP + H2O = dTMP + diphosphate + H(+). The catalysed reaction is UTP + H2O = UMP + diphosphate + H(+). Functionally, nucleoside triphosphate pyrophosphatase that hydrolyzes dTTP and UTP. May have a dual role in cell division arrest and in preventing the incorporation of modified nucleotides into cellular nucleic acids. In Wolbachia pipientis wMel, this protein is dTTP/UTP pyrophosphatase.